The sequence spans 230 residues: Ureidoacrylate amidohydrolase RutB (230 aa).

Asp24 serves as the catalytic Proton acceptor. Residue Lys133 is part of the active site. Cys166 (nucleophile) is an active-site residue.

It belongs to the isochorismatase family. RutB subfamily.

The catalysed reaction is (Z)-3-ureidoacrylate + H2O + H(+) = (Z)-3-aminoacrylate + NH4(+) + CO2. The enzyme catalyses (Z)-3-ureidoacrylate + H2O = (Z)-3-aminoacrylate + carbamate + H(+). It catalyses the reaction (Z)-2-methylureidoacrylate + H2O + H(+) = (Z)-2-methylaminoacrylate + NH4(+) + CO2. Its function is as follows. Hydrolyzes ureidoacrylate to form aminoacrylate and carbamate. The carbamate hydrolyzes spontaneously, thereby releasing one of the nitrogen atoms of the pyrimidine ring as ammonia and one of its carbon atoms as CO2. This is Ureidoacrylate amidohydrolase RutB from Escherichia coli (strain K12 / MC4100 / BW2952).